Here is a 353-residue protein sequence, read N- to C-terminus: MSTLRTALTELVGVQHPVVQTGMGWVAGPRLVAGTANAGGLGILASATMTYTELESAITKTKTLTDKPFGVNIRADASDAPHRIDLLIRESVRVASFALAPKQELIAKLKAAGVVVIPSIGAAKHAKKVASWGADAVIVQGGEGGGHTGPVATTLLLPSVLDAVDIPVVAAGGFYDGRGLAAALAYGAAGVAMGTRFLLTQESTVPDSVKHEYLARGLQDTTVSRKVDGMPHRVLNTDLVNSLEHSGNMRGLVAAARNASKFKAMTGMKWSTLVKDGLAMKKSSDRTWQQIIMAANTPMLLKAGLVEGNTHAGVLASGQVVGLLDDLPTCKDLIDGIVADAIKRIDALGALRA.

FMN contacts are provided by residues 22-24 (GMG), 171-173 (AGG), and 194-195 (GT).

It belongs to the nitronate monooxygenase family.

The enzyme catalyses (3aS,4S,5R,7aS)-5-hydroxy-7a-methyl-1-oxo-octahydro-1H-indene-4-carboxyl-CoA + NAD(+) = (5R,7aS)-5-hydroxy-7a-methyl-1-oxo-2,3,5,6,7,7a-hexahydro-1H-indene-carboxyl-CoA + NADH + H(+). Its pathway is steroid metabolism; cholesterol degradation. Functionally, involved in the final steps of cholesterol and steroid degradation. Probably catalyzes the introduction of a double bound into the C ring of 5OH-HIC-CoA, leading to the formation of (5R,7aS)-5-hydroxy-7a-methyl-1-oxo-3,5,6,7-tetrahydro-2H-indene-4-carboxyl-CoA. This chain is (3aS,4S,5R,7aS)-5-hydroxy-7a-methyl-1-oxo-octahydro-1H-indene-4-carboxyl-CoA dehydrogenase, found in Rhodococcus jostii (strain RHA1).